The chain runs to 203 residues: Enterotoxin-like toxin X (203 aa).

Residues 164–180 are sialic acid-binding motif; it reads YTLESHKELQKNRENVE.

Belongs to the staphylococcal/streptococcal toxin family.

The protein localises to the secreted. In terms of biological role, plays a role in the inhibition of the host innate immune system. Inhibits phagocytosis and killing by human neutrophils by interacting with multiple neutrophil surface glycoproteins in a sialic acid-dependent manner. The chain is Enterotoxin-like toxin X from Staphylococcus aureus.